Here is a 348-residue protein sequence, read N- to C-terminus: RNA 3'-terminal phosphate cyclase (348 aa).

ATP contacts are provided by residues Gln-107 and 290-294 (HLADQ). The Tele-AMP-histidine intermediate role is filled by His-316.

The protein belongs to the RNA 3'-terminal cyclase family. Type 1 subfamily.

Its subcellular location is the cytoplasm. The catalysed reaction is a 3'-end 3'-phospho-ribonucleotide-RNA + ATP = a 3'-end 2',3'-cyclophospho-ribonucleotide-RNA + AMP + diphosphate. Catalyzes the conversion of 3'-phosphate to a 2',3'-cyclic phosphodiester at the end of RNA. The mechanism of action of the enzyme occurs in 3 steps: (A) adenylation of the enzyme by ATP; (B) transfer of adenylate to an RNA-N3'P to produce RNA-N3'PP5'A; (C) and attack of the adjacent 2'-hydroxyl on the 3'-phosphorus in the diester linkage to produce the cyclic end product. The biological role of this enzyme is unknown but it is likely to function in some aspects of cellular RNA processing. The protein is RNA 3'-terminal phosphate cyclase of Nostoc punctiforme (strain ATCC 29133 / PCC 73102).